Consider the following 276-residue polypeptide: Putative pyridoxine kinase (276 aa).

Position 139 (Asn-139) interacts with ATP. Glu-142 is a Mg(2+) binding site. ATP-binding positions include 176–180, Asp-188, Gly-213, and Lys-238; that span reads KGGKA.

This sequence belongs to the ThiD family.

It carries out the reaction pyridoxal + ATP = pyridoxal 5'-phosphate + ADP + H(+). Phosphorylates B6 vitamers; functions in a salvage pathway. Uses pyridoxal, pyridoxine, and pyridoxamine as substrates. The chain is Putative pyridoxine kinase (pdxK) from Staphylococcus epidermidis (strain ATCC 12228 / FDA PCI 1200).